Here is a 256-residue protein sequence, read N- to C-terminus: Imidazole glycerol phosphate synthase subunit HisF (256 aa).

Residues Asp-12 and Asp-131 contribute to the active site.

This sequence belongs to the HisA/HisF family. Heterodimer of HisH and HisF.

The protein resides in the cytoplasm. It carries out the reaction 5-[(5-phospho-1-deoxy-D-ribulos-1-ylimino)methylamino]-1-(5-phospho-beta-D-ribosyl)imidazole-4-carboxamide + L-glutamine = D-erythro-1-(imidazol-4-yl)glycerol 3-phosphate + 5-amino-1-(5-phospho-beta-D-ribosyl)imidazole-4-carboxamide + L-glutamate + H(+). It participates in amino-acid biosynthesis; L-histidine biosynthesis; L-histidine from 5-phospho-alpha-D-ribose 1-diphosphate: step 5/9. Functionally, IGPS catalyzes the conversion of PRFAR and glutamine to IGP, AICAR and glutamate. The HisF subunit catalyzes the cyclization activity that produces IGP and AICAR from PRFAR using the ammonia provided by the HisH subunit. The protein is Imidazole glycerol phosphate synthase subunit HisF of Bifidobacterium longum (strain NCC 2705).